Consider the following 1470-residue polypeptide: Rap guanine nucleotide exchange factor (1470 aa).

Disordered regions lie at residues 130–227 and 250–313; these read PTEP…SYND and HRRE…GGFM. Positions 173-183 are enriched in pro residues; it reads MPPPPVPPRPL. Low complexity-rich tracts occupy residues 184–193 and 215–224; these read RLPQTAAKGP and TTSSSSSNTS. The span at 256-266 shows a compositional bias: polar residues; that stretch reads NSVGGQAQNGI. The span at 275–292 shows a compositional bias: low complexity; that stretch reads RSTASSTTTEGETASNEG. 347-463 is an a nucleoside 3',5'-cyclic phosphate binding site; sequence AFAALPMSIK…IEKDRDGLTG (117 aa). In terms of domain architecture, N-terminal Ras-GEF spans 478 to 592; sequence CGQVLIKGKP…SLLNIACSVK (115 aa). Positions 597 to 679 constitute a PDZ domain; that stretch reads QVILTRRKDD…LTLMLKNNVL (83 aa). Positions 782–869 constitute a Ras-associating domain; sequence PEHVLKIYRN…SRYYLKNNSR (88 aa). The region spanning 894–1124 is the Ras-GEF domain; that stretch reads NAQVVAAQLT…FENSNVATMR (231 aa). The segment covering 1176 to 1189 has biased composition (polar residues); the sequence is QTAHRGANSSSTAN. Disordered stretches follow at residues 1176-1213, 1253-1326, 1347-1370, and 1422-1455; these read QTAH…DQSS, KVKG…NIPP, VIPT…PASS, and ATLP…RMGT. Positions 1198–1211 are enriched in low complexity; sequence PSSLSSQSAGSADQ. Composition is skewed to polar residues over residues 1260–1274 and 1282–1308; these read QITS…SLQR and RQAT…YQSD. Residues 1309–1321 are compositionally biased toward basic and acidic residues; that stretch reads NGRRQRSGSEGRF. Low complexity predominate over residues 1349 to 1370; sequence PTHPHGHSPTSPRCRSRSPASS.

The protein belongs to the RAPGEF2 family. Expressed in hermaphrodite-specific neurons (HSNs), oviduct sheath cells and lateral seam cells.

Functionally, acts as a guanine nucleotide exchange factor for small G protein GTPases like rap-1 and rap-2. Required in the hypodermis, especially in the seam cells, for proper formation of the cuticle. The protein is Rap guanine nucleotide exchange factor (pxf-1) of Caenorhabditis elegans.